The primary structure comprises 427 residues: Adenylosuccinate synthetase (427 aa).

GTP contacts are provided by residues 12–18 and 40–42; these read GDEGKGK and GHT. The active-site Proton acceptor is the Asp13. 2 residues coordinate Mg(2+): Asp13 and Gly40. IMP contacts are provided by residues 13-16, 38-41, Thr126, Arg140, Gln221, Thr236, and Arg299; these read DEGK and NAGH. The active-site Proton donor is the His41. A substrate-binding site is contributed by 295–301; it reads STTNRPR. Residues Arg301, 327–329, and 409–411 each bind GTP; these read KLD and SLG.

It belongs to the adenylosuccinate synthetase family. In terms of assembly, homodimer. Requires Mg(2+) as cofactor.

The protein resides in the cytoplasm. The enzyme catalyses IMP + L-aspartate + GTP = N(6)-(1,2-dicarboxyethyl)-AMP + GDP + phosphate + 2 H(+). It functions in the pathway purine metabolism; AMP biosynthesis via de novo pathway; AMP from IMP: step 1/2. Its function is as follows. Plays an important role in the de novo pathway of purine nucleotide biosynthesis. Catalyzes the first committed step in the biosynthesis of AMP from IMP. This chain is Adenylosuccinate synthetase, found in Borrelia turicatae (strain 91E135).